The following is a 251-amino-acid chain: Cytochrome c oxidase subunit 2 (251 aa).

2 helical membrane passes run 42–62 (NIMF…FTIV) and 83–103 (IIWT…SFIL). Residues His186, Cys221, Glu223, Cys225, His229, and Met232 each contribute to the Cu cation site. Residue Glu223 coordinates Mg(2+).

The protein belongs to the cytochrome c oxidase subunit 2 family. As to quaternary structure, component of the cytochrome c oxidase (complex IV, CIV), a multisubunit enzyme composed of a catalytic core of 3 subunits and several supernumerary subunits. The complex exists as a monomer or a dimer and forms supercomplexes (SCs) in the inner mitochondrial membrane with ubiquinol-cytochrome c oxidoreductase (cytochrome b-c1 complex, complex III, CIII). Cu cation serves as cofactor.

Its subcellular location is the mitochondrion inner membrane. The catalysed reaction is 4 Fe(II)-[cytochrome c] + O2 + 8 H(+)(in) = 4 Fe(III)-[cytochrome c] + 2 H2O + 4 H(+)(out). Functionally, component of the cytochrome c oxidase, the last enzyme in the mitochondrial electron transport chain which drives oxidative phosphorylation. The respiratory chain contains 3 multisubunit complexes succinate dehydrogenase (complex II, CII), ubiquinol-cytochrome c oxidoreductase (cytochrome b-c1 complex, complex III, CIII) and cytochrome c oxidase (complex IV, CIV), that cooperate to transfer electrons derived from NADH and succinate to molecular oxygen, creating an electrochemical gradient over the inner membrane that drives transmembrane transport and the ATP synthase. Cytochrome c oxidase is the component of the respiratory chain that catalyzes the reduction of oxygen to water. Electrons originating from reduced cytochrome c in the intermembrane space (IMS) are transferred via the dinuclear copper A center (CU(A)) of subunit 2 and heme A of subunit 1 to the active site in subunit 1, a binuclear center (BNC) formed by heme A3 and copper B (CU(B)). The BNC reduces molecular oxygen to 2 water molecules using 4 electrons from cytochrome c in the IMS and 4 protons from the mitochondrial matrix. The polypeptide is Cytochrome c oxidase subunit 2 (COX2) (Candida glabrata (strain ATCC 2001 / BCRC 20586 / JCM 3761 / NBRC 0622 / NRRL Y-65 / CBS 138) (Yeast)).